Here is a 451-residue protein sequence, read N- to C-terminus: ATP-dependent protease ATPase subunit HslU (451 aa).

ATP is bound by residues I26, 68–73 (GVGKTE), D263, E328, and R400.

This sequence belongs to the ClpX chaperone family. HslU subfamily. In terms of assembly, a double ring-shaped homohexamer of HslV is capped on each side by a ring-shaped HslU homohexamer. The assembly of the HslU/HslV complex is dependent on binding of ATP.

Its subcellular location is the cytoplasm. ATPase subunit of a proteasome-like degradation complex; this subunit has chaperone activity. The binding of ATP and its subsequent hydrolysis by HslU are essential for unfolding of protein substrates subsequently hydrolyzed by HslV. HslU recognizes the N-terminal part of its protein substrates and unfolds these before they are guided to HslV for hydrolysis. The sequence is that of ATP-dependent protease ATPase subunit HslU from Dichelobacter nodosus (strain VCS1703A).